The following is a 538-amino-acid chain: Cytochrome P450 monooxygenase verH (538 aa).

A helical membrane pass occupies residues 2–21 (VFAMLVVCWSIFLGLWMLVS). Heme is bound at residue C445.

Belongs to the cytochrome P450 family. Requires heme as cofactor.

Its subcellular location is the membrane. It participates in secondary metabolite biosynthesis; terpenoid biosynthesis. It functions in the pathway mycotoxin biosynthesis. Its function is as follows. Cytochrome P450 monooxygenase; part of the gene cluster that mediates the biosynthesis of the neurotoxin verrucosidin, a methylated alpha-pyrone polyketide that inhibits oxidative phosphorylation in mitochondria and thereby causes neurological diseases. The carbon backbone of verrucosidin is synthesized by the HR-PKS verA, and further modified by the other verrucodidin cluster enzymes. The protein is Cytochrome P450 monooxygenase verH of Penicillium polonicum.